A 546-amino-acid polypeptide reads, in one-letter code: Plastidic glucose transporter 4 (546 aa).

A run of 12 helical transmembrane segments spans residues 105–125 (VLPF…HLGV), 148–168 (WIVS…GALA), 182–202 (IPLA…TMIV), 205–225 (LLAG…ISEI), 240–260 (LFIC…AANP), 265–285 (TMFG…AFSP), 345–365 (VVSV…NAVV), 381–401 (VAAS…ASSL), 410–430 (LLLT…LSFT), 441–461 (LAVV…GPVP), 477–497 (AVAL…LYFL), and 503–523 (FGIS…VLYI).

It belongs to the major facilitator superfamily. Sugar transporter (TC 2.A.1.1) family.

It is found in the plastid. The protein localises to the chloroplast inner membrane. Functionally, may be involved in the efflux of glucose towards the cytosol. The chain is Plastidic glucose transporter 4 from Arabidopsis thaliana (Mouse-ear cress).